Consider the following 413-residue polypeptide: MTTTPLSPSTPSNAQVPDIQGRFGRFGGKYVPETLMPALAELETAYQKYRHDPGFQAELQQLLRDYVGRATPLYFAERLTAHYARPDGTGAQIYLKREDLNHTGAHKINNALGQVLLAKRMGKQRIIAETGAGQHGVATATVCARFGLECVIYMGVHDMERQALNVFRMRLMGAEVRPVEAGTGTLKDATSEAIRDWVTNVETTHYILGSVAGPHPYPMMVRDFHAVIGQETRAQALEKWGGLPDILLACVGGGSNAMGLFYEFVNESSIRLIGVEAAGEGVNTEKHAATLTKGRVGVLHGAMSYLLQDEDGQVIEAHSISAGLDYPGVGPEHSYLKDVGRAEYYSVTDEQALAAFQRLSRLEGIIPALETAHAIAYLETLCPQLDGSPRIIINCSGRGDKDVQTVAKFLIPQ.

N6-(pyridoxal phosphate)lysine is present on lysine 107.

The protein belongs to the TrpB family. As to quaternary structure, tetramer of two alpha and two beta chains. Pyridoxal 5'-phosphate serves as cofactor.

It catalyses the reaction (1S,2R)-1-C-(indol-3-yl)glycerol 3-phosphate + L-serine = D-glyceraldehyde 3-phosphate + L-tryptophan + H2O. It functions in the pathway amino-acid biosynthesis; L-tryptophan biosynthesis; L-tryptophan from chorismate: step 5/5. Functionally, the beta subunit is responsible for the synthesis of L-tryptophan from indole and L-serine. This is Tryptophan synthase beta chain from Trichormus variabilis (strain ATCC 29413 / PCC 7937) (Anabaena variabilis).